The following is a 190-amino-acid chain: Frizzled-6 (190 aa).

Positions 1-20 (FGFAWPEELECSRLVNCDET) constitute an FZ domain. The Extracellular portion of the chain corresponds to 1–89 (FGFAWPEELE…NYELDVAKSF (89 aa)). Residues 90-110 (IGIVSIFCLCATLFTFLTFLI) form a helical membrane-spanning segment. Residues 111–121 (DVKRFRYPERP) lie on the Cytoplasmic side of the membrane. Residues 122–142 (IIYYSVCYSIVSLMYFIGFLL) form a helical membrane-spanning segment. The Extracellular segment spans residues 143 to 169 (GNRTACNKADDKLEIGETVVLGSQNKA). Asn144 carries an N-linked (GlcNAc...) asparagine glycan. Residues 170–190 (CTVLFMVLYFFTMAGTIWWVI) traverse the membrane as a helical segment.

The protein belongs to the G-protein coupled receptor Fz/Smo family.

The protein resides in the membrane. It is found in the cell membrane. It localises to the cell surface. Its subcellular location is the apical cell membrane. The protein localises to the cytoplasmic vesicle membrane. Receptor for Wnt proteins. Most of frizzled receptors are coupled to the beta-catenin canonical signaling pathway, which leads to the activation of disheveled proteins, inhibition of GSK-3 kinase, nuclear accumulation of beta-catenin and activation of Wnt target genes. A second signaling pathway involving PKC and calcium fluxes has been seen for some family members, but it is not yet clear if it represents a distinct pathway or if it can be integrated in the canonical pathway, as PKC seems to be required for Wnt-mediated inactivation of GSK-3 kinase. Both pathways seem to involve interactions with G-proteins. Activation by Wnt5A stimulates PKC activity via a G-protein-dependent mechanism. Involved in transduction and intercellular transmission of polarity information during tissue morphogenesis and/or in differentiated tissues. Together with FZD3, may be involved in the neural tube closure and plays a role in the regulation of the establishment of planar cell polarity (PCP), particularly in the orientation of asymmetric bundles of stereocilia on the apical faces of a subset of auditory and vestibular sensory cells located in the inner ear. This chain is Frizzled-6 (FZD6), found in Gallus gallus (Chicken).